The sequence spans 353 residues: ATP-dependent kinase YFH7 (353 aa).

31–39 (GSPGSGKST) provides a ligand contact to ATP.

Belongs to the YFH7 family.

Functionally, ATP-dependent kinase that could be involved in endoplasmic reticulum membrane assembly. The chain is ATP-dependent kinase YFH7 (YFH7) from Saccharomyces cerevisiae (strain ATCC 204508 / S288c) (Baker's yeast).